Here is a 417-residue protein sequence, read N- to C-terminus: Inactive cytochrome P450 76AD1 (417 aa).

A helical transmembrane segment spans residues 4-24 (ATLAMILAIWFISFHFIKLLF).

The protein belongs to the cytochrome P450 family.

The protein localises to the membrane. The protein operates within pigment biosynthesis; betalain biosynthesis. In terms of biological role, inactive cytochrome unable to convert L-DOPA to cyclo-DOPA in the betalain pathway and producing a yellow mutant phenotype. A frameshift replaces 108 amino acids of the active protein found in red beets (AC I3PFJ5) with 27 new residues followed by a stop codon. The chain is Inactive cytochrome P450 76AD1 from Beta vulgaris (Sugar beet).